Reading from the N-terminus, the 695-residue chain is G-protein coupled receptor-associated protein LMBRD2 (695 aa).

The Extracellular portion of the chain corresponds to 1–5; that stretch reads MSGAA. The helical transmembrane segment at 6–21 threads the bilayer; sequence LGLEIVFVFFLALFLL. At 22 to 32 the chain is on the cytoplasmic side; the sequence is HRYGDFKKQHR. Residues 33 to 53 form a helical membrane-spanning segment; that stretch reads LVIIGTLLAWYLCFLIVFILP. Residues 54-105 are Extracellular-facing; it reads LDVSTTIYNRCKHAAANSSPPENSNITGLYATANPVPSQHPCFKPWSYIPDG. Asn-78 is a glycosylation site (N-linked (GlcNAc...) asparagine). Residues 106–126 form a helical membrane-spanning segment; that stretch reads IMPIFWRVVYWTSQFLTWILL. The Cytoplasmic portion of the chain corresponds to 127–150; sequence PFMQSYARSGGFSITGKIKTALIE. The helical transmembrane segment at 151-171 threads the bilayer; sequence NAIYYGTYLLIFGAFLIYVAV. The Extracellular segment spans residues 172–186; sequence NPHLHLEWNQLQTIG. The chain crosses the membrane as a helical span at residues 187-207; it reads IAAANTWGLFLLVLLLGYGLV. The Cytoplasmic segment spans residues 208–387; that stretch reads EIPRSYWNGA…ECLLRPWFYK (180 aa). Residues 227 to 262 adopt a coiled-coil conformation; the sequence is YFKAAKLMTEKADAEENLEDAMEEVRKVNESIKYNH. The chain crosses the membrane as a helical span at residues 388–408; the sequence is ILAVVLSIFSVIVVWSECTFF. The Extracellular segment spans residues 409-432; it reads STTPVLSLFAVFIQLAEKTYNYIY. Residues 433-453 traverse the membrane as a helical segment; sequence IEIACFLSIFFLSICVYSTVF. The Cytoplasmic segment spans residues 454–473; that stretch reads RIRVFNYYYLASHHQTDAYS. A helical membrane pass occupies residues 474–494; it reads LLFSGMLFCRLTPPLCLNFLG. Over 495–521 the chain is Extracellular; that stretch reads LTHMDSSISHKNTQPTAYTSIMGSMKV. The helical transmembrane segment at 522–542 threads the bilayer; that stretch reads LSFIADGFYIYYPMLVVILCI. At 543 to 695 the chain is on the cytoplasmic side; sequence ATYFSLGTRC…MSRSDIFNDV (153 aa). A coiled-coil region spans residues 571 to 603; it reads LVNEGKELIRKEKRKRQRQEEGENRRREWKERY. Residues 581-628 are disordered; sequence KEKRKRQRQEEGENRRREWKERYGHNREDSTRNRNIHTDPKESNFSDV. Over residues 588 to 624 the composition is skewed to basic and acidic residues; sequence RQEEGENRRREWKERYGHNREDSTRNRNIHTDPKESN. The residue at position 633 (Ser-633) is a Phosphoserine. Residues 662 to 682 are disordered; sequence AETFTDDPLESESGRYQPGGR.

It belongs to the LIMR family.

Its subcellular location is the cell membrane. Its function is as follows. Recruited to ligand-activated beta-2 adrenergic receptor/ADRB2, it negatively regulates the adrenergic receptor signaling pathway. May also regulate other G-protein coupled receptors including type-1 angiotensin II receptor/AGTR1. The sequence is that of G-protein coupled receptor-associated protein LMBRD2 from Homo sapiens (Human).